Here is a 433-residue protein sequence, read N- to C-terminus: Glutamate-1-semialdehyde 2,1-aminomutase (433 aa).

The residue at position 273 (lysine 273) is an N6-(pyridoxal phosphate)lysine.

This sequence belongs to the class-III pyridoxal-phosphate-dependent aminotransferase family. HemL subfamily. As to quaternary structure, homodimer. The cofactor is pyridoxal 5'-phosphate.

It localises to the cytoplasm. The enzyme catalyses (S)-4-amino-5-oxopentanoate = 5-aminolevulinate. It participates in porphyrin-containing compound metabolism; protoporphyrin-IX biosynthesis; 5-aminolevulinate from L-glutamyl-tRNA(Glu): step 2/2. The sequence is that of Glutamate-1-semialdehyde 2,1-aminomutase from Polynucleobacter necessarius subsp. necessarius (strain STIR1).